The chain runs to 766 residues: Polyribonucleotide nucleotidyltransferase (766 aa).

Mg(2+)-binding residues include aspartate 490 and aspartate 496. The region spanning 557-616 (PKIDTITIPVDKIKVVIGKGGEQIDKIIAETGVKIDIDDEGLCSIFSSDQSAIDRAKEII) is the KH domain. Residues 626–694 (GEVYEAKVVR…DKGRVDASMR (69 aa)) enclose the S1 motif domain. 2 stretches are compositionally biased toward basic and acidic residues: residues 700-734 (PEGY…DRNN) and 744-766 (FELR…KKPE). A disordered region spans residues 700 to 766 (PEGYVEPERK…FPELSTKKPE (67 aa)).

It belongs to the polyribonucleotide nucleotidyltransferase family. Requires Mg(2+) as cofactor.

It localises to the cytoplasm. The catalysed reaction is RNA(n+1) + phosphate = RNA(n) + a ribonucleoside 5'-diphosphate. Involved in mRNA degradation. Catalyzes the phosphorolysis of single-stranded polyribonucleotides processively in the 3'- to 5'-direction. The protein is Polyribonucleotide nucleotidyltransferase of Lactococcus lactis subsp. cremoris (strain MG1363).